Reading from the N-terminus, the 250-residue chain is Probable aquaporin TIP2-2 (250 aa).

Met-1 carries the N-acetylmethionine modification. At 1 to 24 (MVKIEIGSVGDSFSVASLKAYLSE) the chain is on the cytoplasmic side. Lys-3 carries the N6,N6-dimethyllysine modification. The chain crosses the membrane as a helical span at residues 25 to 45 (FIATLLFVFAGVGSALAFAKL). The Vacuolar portion of the chain corresponds to 46–53 (TSDAALDP). The helical transmembrane segment at 54–74 (AGLVAVAVAHAFALFVGVSIA) threads the bilayer. Residues 75 to 101 (ANISGGHLNPAVTLGLAVGGNITVITG) are Cytoplasmic-facing. The NPA 1 motif lies at 83–85 (NPA). Residues 102–122 (FFYWIAQCLGSIVACLLLVFV) traverse the membrane as a helical segment. Topologically, residues 123–133 (TNGESVPTHGV) are vacuolar. The helical transmembrane segment at 134 to 154 (AAGLGAIEGVVMEIVVTFALV) threads the bilayer. Over 155–168 (YTVYATAADPKKGS) the chain is Cytoplasmic. A helical transmembrane segment spans residues 169–189 (LGTIAPIAIGFIVGANILAAG). Residues 190 to 210 (PFSGGSMNPARSFGPAVVSGD) lie on the Vacuolar side of the membrane. Positions 197-199 (NPA) match the NPA 2 motif. Residues 211-231 (FSQIWIYWVGPLVGGALAGLI) form a helical membrane-spanning segment. Residues 232-250 (YGDVFIGSYAPAPTTESYP) are Cytoplasmic-facing. Ser-248 carries the phosphoserine modification.

Belongs to the MIP/aquaporin (TC 1.A.8) family. TIP (TC 1.A.8.10) subfamily. In terms of assembly, interacts with cucumber mosaic virus (CMV) Protein 1a. In terms of tissue distribution, expressed above groung and in roots.

Its subcellular location is the vacuole membrane. Functionally, aquaporins facilitate the transport of water and small neutral solutes across cell membranes. This chain is Probable aquaporin TIP2-2 (TIP2-2), found in Arabidopsis thaliana (Mouse-ear cress).